The sequence spans 467 residues: 3-isopropylmalate dehydratase large subunit (467 aa).

[4Fe-4S] cluster is bound by residues Cys347, Cys407, and Cys410.

Belongs to the aconitase/IPM isomerase family. LeuC type 1 subfamily. Heterodimer of LeuC and LeuD. [4Fe-4S] cluster serves as cofactor.

It catalyses the reaction (2R,3S)-3-isopropylmalate = (2S)-2-isopropylmalate. The protein operates within amino-acid biosynthesis; L-leucine biosynthesis; L-leucine from 3-methyl-2-oxobutanoate: step 2/4. Catalyzes the isomerization between 2-isopropylmalate and 3-isopropylmalate, via the formation of 2-isopropylmaleate. The chain is 3-isopropylmalate dehydratase large subunit from Prochlorococcus marinus (strain MIT 9301).